The sequence spans 472 residues: Phosphoglucosamine mutase (472 aa).

The active-site Phosphoserine intermediate is serine 123. Mg(2+) is bound by residues serine 123, aspartate 262, aspartate 264, and aspartate 266. At serine 123 the chain carries Phosphoserine.

This sequence belongs to the phosphohexose mutase family. Mg(2+) serves as cofactor. In terms of processing, activated by phosphorylation.

It carries out the reaction alpha-D-glucosamine 1-phosphate = D-glucosamine 6-phosphate. Catalyzes the conversion of glucosamine-6-phosphate to glucosamine-1-phosphate. This chain is Phosphoglucosamine mutase, found in Synechococcus elongatus (strain ATCC 33912 / PCC 7942 / FACHB-805) (Anacystis nidulans R2).